We begin with the raw amino-acid sequence, 122 residues long: UPF0102 protein BARBAKC583_1042 (122 aa).

Belongs to the UPF0102 family.

This chain is UPF0102 protein BARBAKC583_1042, found in Bartonella bacilliformis (strain ATCC 35685 / KC583 / Herrer 020/F12,63).